A 473-amino-acid polypeptide reads, in one-letter code: Ribulose bisphosphate carboxylase large chain (473 aa).

Positions 1–136 (MAVKKYSAGV…RLEDVRFPLA (136 aa)) are necessary and sufficient to target proteins to carboxysomes, interacts with shell proteins. Substrate-binding residues include N116 and T166. Catalysis depends on K168, which acts as the Proton acceptor. K170 contacts substrate. Mg(2+) contacts are provided by K194, D196, and E197. The residue at position 194 (K194) is an N6-carboxylysine. H287 serves as the catalytic Proton acceptor. R288, H320, and S372 together coordinate substrate.

This sequence belongs to the RuBisCO large chain family. Type I subfamily. As to quaternary structure, heterohexadecamer of 8 large chains and 8 small chains. Forms a CsoS2-CsoS1-RuBisCO complex. The N-terminus (residues 1-136) interacts with shell proteins CsoS1A, CsoS1B and CsoS1C. Holo-RuBisCO interacts with the N-terminal repeats of CsoS2; binding is sensitive to ionic strength. A fusion of a single N-terminal repeat to the C-terminus of the large subunit of RuBisCO (cbbL) shows the repeat can lie between a CbbL dimer, making minor contacts to CbbS; thus each RuBisCO holoenzyme could bind 8 repeats. The cofactor is Mg(2+).

The protein resides in the carboxysome. The catalysed reaction is 2 (2R)-3-phosphoglycerate + 2 H(+) = D-ribulose 1,5-bisphosphate + CO2 + H2O. It carries out the reaction D-ribulose 1,5-bisphosphate + O2 = 2-phosphoglycolate + (2R)-3-phosphoglycerate + 2 H(+). In terms of biological role, ruBisCO catalyzes two reactions: the carboxylation of D-ribulose 1,5-bisphosphate, the primary event in carbon dioxide fixation, as well as the oxidative fragmentation of the pentose substrate. Both reactions occur simultaneously and in competition at the same active site. There are estimated to be 270 RuBisCO heterohexadecamers per carboxysome. Functionally, alpha-carboxysomes are able to assemble in the absence of RuBisCO, unlike beta-carboxysomes. The RuBisCO large subunit is required for enzyme integration into carboxysomes; replacing it with the carboxysomally targeted gene (Tcr_0838, AC Q31HD9) of H.crungenus places RuBisCO in the carboxysome, while the non-carboxysomal large subunit of H.crungenus (Tcr_0427, AC Q31IK0) is not incorporated in the carboxysome. The polypeptide is Ribulose bisphosphate carboxylase large chain (Halothiobacillus neapolitanus (strain ATCC 23641 / c2) (Thiobacillus neapolitanus)).